A 217-amino-acid chain; its full sequence is tRNA (guanine-N(7)-)-methyltransferase (217 aa).

Positions 43, 68, 101, and 123 each coordinate S-adenosyl-L-methionine. Lysine 127 contributes to the substrate binding site. An interaction with RNA region spans residues 129-134 (RHNKRR). Substrate-binding positions include aspartate 159 and 196–199 (TEYE).

The protein belongs to the class I-like SAM-binding methyltransferase superfamily. TrmB family.

It catalyses the reaction guanosine(46) in tRNA + S-adenosyl-L-methionine = N(7)-methylguanosine(46) in tRNA + S-adenosyl-L-homocysteine. It functions in the pathway tRNA modification; N(7)-methylguanine-tRNA biosynthesis. In terms of biological role, catalyzes the formation of N(7)-methylguanine at position 46 (m7G46) in tRNA. The chain is tRNA (guanine-N(7)-)-methyltransferase from Clostridium botulinum (strain 657 / Type Ba4).